The sequence spans 498 residues: Glycerol kinase (498 aa).

Threonine 11 provides a ligand contact to ADP. ATP-binding residues include threonine 11, serine 12, and serine 13. Threonine 11 contacts sn-glycerol 3-phosphate. Arginine 15 contacts ADP. 4 residues coordinate sn-glycerol 3-phosphate: arginine 81, glutamate 82, tyrosine 133, and aspartate 242. Arginine 81, glutamate 82, tyrosine 133, aspartate 242, and glutamine 243 together coordinate glycerol. Residues threonine 264 and glycine 307 each contribute to the ADP site. ATP-binding residues include threonine 264, glycine 307, glutamine 311, and glycine 412. ADP is bound by residues glycine 412 and asparagine 416.

It belongs to the FGGY kinase family.

The enzyme catalyses glycerol + ATP = sn-glycerol 3-phosphate + ADP + H(+). It participates in polyol metabolism; glycerol degradation via glycerol kinase pathway; sn-glycerol 3-phosphate from glycerol: step 1/1. Its activity is regulated as follows. Inhibited by fructose 1,6-bisphosphate (FBP). Key enzyme in the regulation of glycerol uptake and metabolism. Catalyzes the phosphorylation of glycerol to yield sn-glycerol 3-phosphate. The sequence is that of Glycerol kinase from Delftia acidovorans (strain DSM 14801 / SPH-1).